We begin with the raw amino-acid sequence, 129 residues long: Glycine cleavage system H protein (129 aa).

The region spanning 24-106 (LLKIGVSEFA…IGDGWLVILK (83 aa)) is the Lipoyl-binding domain. At Lys65 the chain carries N6-lipoyllysine.

This sequence belongs to the GcvH family. In terms of assembly, the glycine cleavage system is composed of four proteins: P, T, L and H. (R)-lipoate serves as cofactor.

Its function is as follows. The glycine cleavage system catalyzes the degradation of glycine. The H protein shuttles the methylamine group of glycine from the P protein to the T protein. The chain is Glycine cleavage system H protein from Prochlorococcus marinus (strain MIT 9301).